Here is a 32-residue protein sequence, read N- to C-terminus: Kappa-theraphotoxin-Gr2b (32 aa).

3 cysteine pairs are disulfide-bonded: Cys-2–Cys-16, Cys-9–Cys-21, and Cys-15–Cys-25.

This sequence belongs to the neurotoxin 30 (phrixotoxin) family. In terms of tissue distribution, expressed by the venom gland.

The protein localises to the secreted. Functionally, binds the voltage-sensor domain of the potassium channel KvAP (from the archaeon Aeropyrum pernix) and affects channel gating. The chain is Kappa-theraphotoxin-Gr2b from Grammostola rosea (Chilean rose tarantula).